A 232-amino-acid chain; its full sequence is Chaperone protein CssC (232 aa).

Positions 1–20 are cleaved as a signal peptide; the sequence is MKSKLIILLTLVPFSSFSTG.

It belongs to the periplasmic pilus chaperone family.

The protein localises to the periplasm. Functionally, involved in the biogenesis of the CS6 fimbria. The polypeptide is Chaperone protein CssC (cssC) (Escherichia coli).